The chain runs to 557 residues: Small ribosomal subunit protein bS1 (557 aa).

6 S1 motif domains span residues 21 to 87 (GSIV…LSRE), 105 to 171 (SATV…VSRR), 192 to 260 (GMEV…LGLK), 277 to 347 (GTKL…LGLK), 364 to 434 (GDRV…LGVK), and 451 to 520 (GAIV…LSIR).

The protein belongs to the bacterial ribosomal protein bS1 family.

In terms of biological role, binds mRNA; thus facilitating recognition of the initiation point. It is needed to translate mRNA with a short Shine-Dalgarno (SD) purine-rich sequence. This Dickeya dadantii (strain 3937) (Erwinia chrysanthemi (strain 3937)) protein is Small ribosomal subunit protein bS1 (rpsA).